A 413-amino-acid polypeptide reads, in one-letter code: MAAWEFALGLLTASLWRWARKWRSPVKVKPMLAAVSSLEPQLEQITTDLRDRDRLLEDLPVSFLLLDADNLVLEANRSARVLLALPPEDYCRPLLEVVRSYELDRLVARCRAANAPQTDRWTLTPVNPDPLQVVPQTPRPVQGQAIPLSNGQIGVLIEDRQELVDLAQQRNRWVSDVAHELKTPLTSIRLLAEALRDRLQDEPQVWVDRLLGETQRLGQLVQDLLELSRLEQGPSGLQKLEAVDLVALLTSVRNSLEPLAEPLRLGWAYQGPEQGFVRGDRQRLFRLWLNLVDNAIRHSPSGGCLYVELRQRGDTWICDLYDDGPGFADADLPYLFERFYRGDPSRVRPAAASSSSPGSGLGLAIARQVVEAHQGRISARNHPVTGGAWLRVQLPQEPSLTPALKIGTGRRSG.

Residues 176 to 398 (DVAHELKTPL…WLRVQLPQEP (223 aa)) form the Histidine kinase domain. His-179 carries the phosphohistidine; by autocatalysis modification.

The protein localises to the cytoplasm. It catalyses the reaction ATP + protein L-histidine = ADP + protein N-phospho-L-histidine.. Its function is as follows. Member of the two-component regulatory system SphR/SphS. Sensory kinase. Is involved in inducible production of alkaline phosphatase in response to phosphate limitation as it is directly involved in the regulation of phoA transcription in response to phosphate limitation. SphS functions as a protein kinase that phosphorylates SphR. This Synechococcus elongatus (strain ATCC 33912 / PCC 7942 / FACHB-805) (Anacystis nidulans R2) protein is Sensor protein SphS (sphS).